The following is a 1069-amino-acid chain: DNA annealing helicase and endonuclease ZRANB3 (1069 aa).

A Helicase ATP-binding domain is found at 46–208 (VFALRRDGRC…FMQIEALFPQ (163 aa)). Residues 46 to 481 (VFALRRDGRC…GRKEKLQATE (436 aa)) are DNA annealing helicase activity. An ATP-binding site is contributed by 59-66 (DEMGLGKT). A DEAH box motif is present at residues 157-160 (DESH). Positions 325 to 485 (AVKDYIKMLL…KLQATEDDKE (161 aa)) constitute a Helicase C-terminal domain. The PIP-box motif lies at 518–525 (QHDIRSFF). The RanBP2-type zinc finger occupies 617–646 (PEKGWQCGFCTFLNNPGLPYCEMCENPRSR). A disordered region spans residues 648–720 (AGRNHLQDNN…PEIGQLNNSG (73 aa)). Basic and acidic residues-rich tracts occupy residues 652–661 (HLQDNNKNDE) and 677–707 (ECERQCPERLEAEQSANSKEEALEGGGEDRL). Residues 1001 to 1041 (PGEGHFWQVDHIRPVYEGGGQCSLDNLQTLCTVCHKERTAQ) enclose the HNH domain. The tract at residues 1001–1069 (PGEGHFWQVD…SDITRFLVKK (69 aa)) is endonuclease activity. The short motif at 1064–1068 (RFLVK) is the APIM motif element.

The protein belongs to the SNF2/RAD54 helicase family. In terms of assembly, interacts (via PIP-box and RanBP2-type zinc finger) with PCNA (when PCNA is polyubiquitinated via 'Lys-63'-linked polyubiquitin).

Its subcellular location is the nucleus. The protein localises to the chromosome. Functionally, DNA annealing helicase and endonuclease required to maintain genome stability at stalled or collapsed replication forks by facilitating fork restart and limiting inappropriate recombination that could occur during template switching events. Recruited to the sites of stalled DNA replication by polyubiquitinated PCNA and acts as a structure-specific endonuclease that cleaves the replication fork D-loop intermediate, generating an accessible 3'-OH group in the template of the leading strand, which is amenable to extension by DNA polymerase. In addition to endonuclease activity, also catalyzes the fork regression via annealing helicase activity in order to prevent disintegration of the replication fork and the formation of double-strand breaks. This Mus musculus (Mouse) protein is DNA annealing helicase and endonuclease ZRANB3 (Zranb3).